Consider the following 359-residue polypeptide: Double-stranded RNA-binding protein 3 (359 aa).

DRBM domains are found at residues 1–70 (MYKN…ALSS) and 87–155 (IYKN…SLRK). Residues 266 to 280 (EKKQSLDDPKPEMRI) show a composition bias toward basic and acidic residues. Disordered regions lie at residues 266-292 (EKKQSLDDPKPEMRIKTSSPSPLSSSV) and 328-359 (APPPKPNPNPNSSPFITRELGNGSQEKKSLPN). Pro residues predominate over residues 328 to 338 (APPPKPNPNPN).

Functionally, binds double-stranded RNA. The sequence is that of Double-stranded RNA-binding protein 3 (DRB3) from Arabidopsis thaliana (Mouse-ear cress).